The following is a 318-amino-acid chain: uncharacterized protein (318 aa).

This sequence belongs to the NAD(P)-dependent epimerase/dehydratase family.

This is an uncharacterized protein from Staphylococcus epidermidis (strain ATCC 12228 / FDA PCI 1200).